Consider the following 508-residue polypeptide: Photosystem II CP47 reaction center protein (508 aa).

The next 6 helical transmembrane spans lie at 21 to 36, 101 to 115, 140 to 156, 203 to 218, 237 to 252, and 457 to 472; these read AVHI…WAGS, IVFS…IWHW, GIHL…FGAF, IAAG…FHLS, VLSS…AFVV, and SFAL…HGSR.

The protein belongs to the PsbB/PsbC family. PsbB subfamily. As to quaternary structure, PSII is composed of 1 copy each of membrane proteins PsbA, PsbB, PsbC, PsbD, PsbE, PsbF, PsbH, PsbI, PsbJ, PsbK, PsbL, PsbM, PsbT, PsbX, PsbY, PsbZ, Psb30/Ycf12, at least 3 peripheral proteins of the oxygen-evolving complex and a large number of cofactors. It forms dimeric complexes. Binds multiple chlorophylls. PSII binds additional chlorophylls, carotenoids and specific lipids. is required as a cofactor.

It localises to the plastid. The protein localises to the chloroplast thylakoid membrane. In terms of biological role, one of the components of the core complex of photosystem II (PSII). It binds chlorophyll and helps catalyze the primary light-induced photochemical processes of PSII. PSII is a light-driven water:plastoquinone oxidoreductase, using light energy to abstract electrons from H(2)O, generating O(2) and a proton gradient subsequently used for ATP formation. This chain is Photosystem II CP47 reaction center protein, found in Lotus japonicus (Lotus corniculatus var. japonicus).